Reading from the N-terminus, the 324-residue chain is tRNA U34 carboxymethyltransferase (324 aa).

Carboxy-S-adenosyl-L-methionine-binding positions include Lys-91, Trp-105, Lys-110, Gly-130, 152–154 (DPS), 181–182 (IE), Met-196, Tyr-200, and Arg-315.

The protein belongs to the class I-like SAM-binding methyltransferase superfamily. CmoB family. As to quaternary structure, homotetramer.

The enzyme catalyses carboxy-S-adenosyl-L-methionine + 5-hydroxyuridine(34) in tRNA = 5-carboxymethoxyuridine(34) in tRNA + S-adenosyl-L-homocysteine + H(+). In terms of biological role, catalyzes carboxymethyl transfer from carboxy-S-adenosyl-L-methionine (Cx-SAM) to 5-hydroxyuridine (ho5U) to form 5-carboxymethoxyuridine (cmo5U) at position 34 in tRNAs. This chain is tRNA U34 carboxymethyltransferase, found in Photobacterium profundum (strain SS9).